The sequence spans 291 residues: Pyridoxal 5'-phosphate synthase subunit PdxS (291 aa).

Asp23 is a D-ribose 5-phosphate binding site. Residue Lys80 is the Schiff-base intermediate with D-ribose 5-phosphate of the active site. Residue Gly152 coordinates D-ribose 5-phosphate. Arg164 serves as a coordination point for D-glyceraldehyde 3-phosphate. Residues Gly213 and 234-235 (GS) each bind D-ribose 5-phosphate.

Belongs to the PdxS/SNZ family. As to quaternary structure, in the presence of PdxT, forms a dodecamer of heterodimers.

The enzyme catalyses aldehydo-D-ribose 5-phosphate + D-glyceraldehyde 3-phosphate + L-glutamine = pyridoxal 5'-phosphate + L-glutamate + phosphate + 3 H2O + H(+). The protein operates within cofactor biosynthesis; pyridoxal 5'-phosphate biosynthesis. Catalyzes the formation of pyridoxal 5'-phosphate from ribose 5-phosphate (RBP), glyceraldehyde 3-phosphate (G3P) and ammonia. The ammonia is provided by the PdxT subunit. Can also use ribulose 5-phosphate and dihydroxyacetone phosphate as substrates, resulting from enzyme-catalyzed isomerization of RBP and G3P, respectively. The chain is Pyridoxal 5'-phosphate synthase subunit PdxS from Desulfitobacterium hafniense (strain DSM 10664 / DCB-2).